The sequence spans 302 residues: Sodium/potassium-transporting ATPase subunit beta-233 (302 aa).

Over 1–30 the chain is Cytoplasmic; that stretch reads MSGNKDSDGGWKTFIWNSEKKELLGRTGCS. A helical; Signal-anchor for type II membrane protein transmembrane segment spans residues 31 to 51; it reads WFKILLFYVIFYGCLAAVFVG. The Extracellular portion of the chain corresponds to 52-302; the sequence is TIQALLLTLS…FDIKITVNDS (251 aa). Cystine bridges form between Cys125-Cys148 and Cys158-Cys174. Asn193 and Asn263 each carry an N-linked (GlcNAc...) asparagine glycan. Cysteines 213 and 274 form a disulfide.

It belongs to the X(+)/potassium ATPases subunit beta family. In terms of assembly, the sodium/potassium-transporting ATPase is composed of a catalytic alpha subunit, an auxiliary non-catalytic beta subunit and an additional regulatory subunit. Post-translationally, glycosylated. In terms of tissue distribution, expressed mainly in epithelial tissues.

Its subcellular location is the cell membrane. Its function is as follows. This is the non-catalytic component of the active enzyme, which catalyzes the hydrolysis of ATP coupled with the exchange of Na(+) and K(+) ions across the plasma membrane. The beta subunit regulates, through assembly of alpha/beta heterodimers, the number of sodium pumps transported to the plasma membrane. The protein is Sodium/potassium-transporting ATPase subunit beta-233 of Anguilla anguilla (European freshwater eel).